Here is a 318-residue protein sequence, read N- to C-terminus: Glycerol 2-dehydrogenase (NADP(+)) (318 aa).

Tyrosine 52 serves as the catalytic Proton donor. Position 115 (histidine 115) interacts with substrate. 217 to 277 (SPLGSQNQVP…SSTPSRIESN (61 aa)) lines the NADP(+) pocket.

Belongs to the aldo/keto reductase family.

The catalysed reaction is glycerol + NADP(+) = dihydroxyacetone + NADPH + H(+). Glycerol oxidoreductase probably involved in glycerol synthesis. The chain is Glycerol 2-dehydrogenase (NADP(+)) (gld2) from Hypocrea jecorina (Trichoderma reesei).